The primary structure comprises 548 residues: MIVWQALFVVYCLFTTSIHGLFQDFNPFANKNISLKFPSLNRWEKNVMATGQQTIINSDSIYEWTPILSNITAGKKDSFVFTIDAEASGYGFAPTYEVLMFISGNICQMPMNRSDVDLTIYYSFNETVLENPNIGQSAVFQDGYIQALAISPVQSSSSNATSTYSNLYVVAELVNSTTEQPLSSSDASENWEYRLSISENDLVFQWDVRPWVEVLDTDMNSALLSTGNVTADAKVYHNYSIYDPSLYDLYVYSYEDSVQLNQNYNLSLCAVKNGPYLVSSQNTSNATVTSNSTNPLERTDLAIQKKITEYGGSVTEMFYVTGLNASTTYVAYLTKKISNGDGLSSVGGILFSHVYFTTRSTDVCSLIFGLDFCSDVAYSVPTSSFSVGNKTLMAQTYDHIAEALYANFSKALQLISCDADKDARYSPVMTCDDCAEAYRDWVCAVSIPRCTTTSSQYYIHRDKSHNRNDYLNKFIKPLDDYYEILPCIDMCYTLVRNCPSDFQFSCPNDLTTEDLLYQSYNFYMDTDYSTCNYIGNSSLMVIHPLDDT.

The signal sequence occupies residues 1–20 (MIVWQALFVVYCLFTTSIHG). Over 21-341 (LFQDFNPFAN…YLTKKISNGD (321 aa)) the chain is Extracellular. 13 N-linked (GlcNAc...) asparagine glycosylation sites follow: N32, N70, N112, N125, N159, N175, N228, N238, N265, N282, N285, N291, and N324. Residues 342–358 (GLSSVGGILFSHVYFTT) traverse the membrane as a helical segment. Residues 359–548 (RSTDVCSLIF…LMVIHPLDDT (190 aa)) are Cytoplasmic-facing.

Forms an oligomer with a molecular mass of 200 kDa by disulfide bonds. Interacts with CCH1 to form a Ca(2+) influx channel. In terms of processing, N-glycosylated.

The protein resides in the cell membrane. Its function is as follows. Calcium-permeable, cation-selective stretch-activated channel (SAC) that functions together with CCH1 to mediate calcium entry into cells. Required during mating. Together with CCH1, essential for tolerance to iron stress, which leads to an increased oxidative poise, and to cold stress. The chain is Stretch-activated cation channel MID1 (MID1) from Saccharomyces cerevisiae (strain ATCC 204508 / S288c) (Baker's yeast).